Reading from the N-terminus, the 266-residue chain is Norfluorocurarine synthase 1 (266 aa).

Residues 11-121 (HFVLVHGAGH…VMPDAVHPPS (111 aa)) form the AB hydrolase-1 domain. Catalysis depends on residues serine 86, aspartate 216, and histidine 244.

This sequence belongs to the AB hydrolase superfamily. As to quaternary structure, homodimer. As to expression, mainly expressed in roots.

It carries out the reaction 17-dehydropreakuammicine + H2O = norfluorocurarine + methanol + CO2. It participates in alkaloid biosynthesis. Its function is as follows. Hydrolase involved in the biosynthesis of curare monoterpene indole alkaloids (MIAs), natural products such as strychnine, a neurotoxic compound used as a pesticide to control rodents, and its pharmacologically active derivatives, including brucine, used to regulate blood pressure. Curare alkaloids act as animal glycine receptor antagonists. Catalyzes the conversion of dehydropreakuammicine to norfluorocurarine. The polypeptide is Norfluorocurarine synthase 1 (Strychnos nux-vomica (Poison nut)).